A 182-amino-acid polypeptide reads, in one-letter code: Large ribosomal subunit protein uL6 (182 aa).

This sequence belongs to the universal ribosomal protein uL6 family. As to quaternary structure, part of the 50S ribosomal subunit.

Functionally, this protein binds to the 23S rRNA, and is important in its secondary structure. It is located near the subunit interface in the base of the L7/L12 stalk, and near the tRNA binding site of the peptidyltransferase center. This chain is Large ribosomal subunit protein uL6, found in Carboxydothermus hydrogenoformans (strain ATCC BAA-161 / DSM 6008 / Z-2901).